We begin with the raw amino-acid sequence, 496 residues long: Glutamate--cysteine ligase B, chloroplastic (496 aa).

Residues M1–P34 constitute a chloroplast transit peptide. The interval P14 to T53 is disordered. The segment covering P29–G38 has biased composition (low complexity). A disulfide bridge links C160 with C380.

Belongs to the carboxylate-amine ligase family. Glutamate--cysteine ligase type 2 subfamily. In terms of assembly, homodimer or monomer when oxidized or reduced, respectively. The Cys-160-Cys-380 disulfide bridge is known to modulate the enzyme activity according to the redox status. The oxidized form constitutes the active enzyme.

It localises to the plastid. The protein localises to the chloroplast. It carries out the reaction L-cysteine + L-glutamate + ATP = gamma-L-glutamyl-L-cysteine + ADP + phosphate + H(+). The protein operates within sulfur metabolism; glutathione biosynthesis; glutathione from L-cysteine and L-glutamate: step 1/2. The polypeptide is Glutamate--cysteine ligase B, chloroplastic (GSH1-2) (Oryza sativa subsp. japonica (Rice)).